The sequence spans 1006 residues: Collagen alpha-2(I) chain (1006 aa).

Positions serine 1–glycine 84 are disordered. 4-hydroxyproline occurs at positions 10, 13, 35, and 41. A compositionally biased stretch (low complexity) spans leucine 28–alanine 64. Residue lysine 86 is modified to 5-hydroxylysine; alternate. O-linked (Gal...) hydroxylysine; alternate glycosylation is present at lysine 86. Residues glycine 99–alanine 1006 are disordered. Low complexity-rich tracts occupy residues serine 142–proline 163 and proline 209–proline 230. Gly residues predominate over residues glycine 264–glycine 273. Over residues serine 274–serine 284 the composition is skewed to low complexity. Over residues glycine 306–glycine 315 the composition is skewed to gly residues. Low complexity predominate over residues proline 328 to serine 344. A 4-hydroxyproline mark is found at proline 350 and proline 353. Low complexity predominate over residues leucine 379–alanine 398. Over residues glycine 447–glycine 456 the composition is skewed to gly residues. Low complexity-rich tracts occupy residues proline 503–proline 520 and glutamate 532–alanine 542. The segment covering glycine 543–glycine 552 has biased composition (gly residues). Composition is skewed to low complexity over residues alanine 585–serine 615 and valine 622–alanine 642. A compositionally biased stretch (basic and acidic residues) spans lysine 643–lysine 652. Low complexity predominate over residues proline 660 to alanine 670. Positions glycine 680–glycine 689 are enriched in gly residues. Positions threonine 691–threonine 700 are enriched in low complexity. Residues glycine 737 to glycine 746 show a composition bias toward gly residues. Composition is skewed to low complexity over residues serine 754–proline 781 and leucine 789–proline 799. Residues glycine 800–arginine 810 show a composition bias toward gly residues. The segment covering tyrosine 837–proline 882 has biased composition (low complexity). A compositionally biased stretch (basic and acidic residues) spans arginine 892–proline 903. The span at serine 976 to proline 988 shows a compositional bias: pro residues.

It belongs to the fibrillar collagen family. In terms of assembly, trimers of one alpha 2(I) and two alpha 1(I) chains. Interacts (via C-terminus) with TMEM131 (via PapD-L domain); the interaction is direct and is involved in assembly and TRAPPIII ER-to-Golgi transport complex-dependent secretion of collagen. In terms of processing, prolines at the third position of the tripeptide repeating unit (G-X-Y) are hydroxylated in some or all of the chains. Expressed in bones.

It is found in the secreted. The protein localises to the extracellular space. Its subcellular location is the extracellular matrix. Type I collagen is a member of group I collagen (fibrillar forming collagen). This chain is Collagen alpha-2(I) chain, found in Choloepus hoffmanni (Hoffmann's two-fingered sloth).